A 3080-amino-acid polypeptide reads, in one-letter code: Adhesion G-protein coupled receptor G4 (3080 aa).

An N-terminal signal peptide occupies residues 1–27 (MKEHIIYQKLYGLILMSSFIFLSDTLS). Over 28-2740 (LKGKKLDFFG…SRSTVDSVNE (2713 aa)) the chain is Extracellular. The region spanning 29 to 228 (KGKKLDFFGR…IPTVDRTLRC (200 aa)) is the Pentraxin (PTX) domain. 2 cysteine pairs are disulfide-bonded: Cys-58–Cys-123 and Cys-200–Cys-228. Residue Asp-202 coordinates Mg(2+). Asn-233, Asn-487, Asn-836, and Asn-899 each carry an N-linked (GlcNAc...) asparagine glycan. Residues 946 to 959 (SEGISAGSPTSGST) are compositionally biased toward polar residues. A disordered region spans residues 946–965 (SEGISAGSPTSGSTHIFGEP). N-linked (GlcNAc...) asparagine glycosylation occurs at Asn-1020. Residues 1274–1348 (VTEMSPSKNS…ITPTLTSSNT (75 aa)) are disordered. Composition is skewed to polar residues over residues 1277-1296 (MSPS…SLEM), 1305-1315 (TKISSHQTHSP), and 1324-1348 (SDGN…SSNT). An N-linked (GlcNAc...) asparagine glycan is attached at Asn-1519. The span at 2109-2139 (SRTTITANPRTVSHPSSFSRKTMSPSTTDHT) shows a compositional bias: polar residues. The disordered stretch occupies residues 2109–2141 (SRTTITANPRTVSHPSSFSRKTMSPSTTDHTLS). N-linked (GlcNAc...) asparagine glycans are attached at residues Asn-2361 and Asn-2640. Residues 2578 to 2734 (MAFSIHSYEE…GVLMDLSRST (157 aa)) form the GAIN-B domain. 2 disulfide bridges follow: Cys-2685–Cys-2716 and Cys-2704–Cys-2718. Residues 2685–2734 (CAFWDFENNNGLGGWNSSGCKVKETNVNYTICQCDHLTHFGVLMDLSRST) form a GPS region. The tract at residues 2723 to 2734 (HFGVLMDLSRST) is stachel. Residues 2741 to 2766 (QILALITYTGCGISSIFLGVAVVTYI) form a helical membrane-spanning segment. Residues 2767 to 2777 (AFHKLRKDYPA) are Cytoplasmic-facing. The chain crosses the membrane as a helical span at residues 2778 to 2800 (KILINLCTALLMLNLVFLINSWL). Residues 2801–2806 (SSFQKV) lie on the Extracellular side of the membrane. The helical transmembrane segment at 2807-2835 (GVCITAAVALHYFLLVSFTWMGLEAVHMY) threads the bilayer. A disulfide bond links Cys-2809 and Cys-2886. At 2836–2849 (LALVKVFNIYIPNY) the chain is on the cytoplasmic side. The chain crosses the membrane as a helical span at residues 2850–2870 (ILKFCLVGWGIPAIMVAITVS). Residues 2871-2892 (VKKDLYGTLSPTTPFCWIKDDS) lie on the Extracellular side of the membrane. The chain crosses the membrane as a helical span at residues 2893–2918 (IFYISVVAYFCLIFLMNLSMFCTVLV). The Cytoplasmic portion of the chain corresponds to 2919–2937 (QLNSVKSQIQKTRRKMILH). The chain crosses the membrane as a helical span at residues 2938–2961 (DLKGTMSLTFLLGLTWGFAFFAWG). Residues 2962 to 2965 (PMRN) lie on the Extracellular side of the membrane. The helical transmembrane segment at 2966–2989 (FFLYLFAIFNTLQGFFIFVFHCVM) threads the bilayer. Topologically, residues 2990-3080 (KESVREQWQI…FDKDPYCSSP (91 aa)) are cytoplasmic. Residues 3051–3065 (FKSLGSAQGTPSEIS) are compositionally biased toward polar residues. A disordered region spans residues 3051–3080 (FKSLGSAQGTPSEISFPNDDFDKDPYCSSP).

It belongs to the G-protein coupled receptor 2 family. Adhesion G-protein coupled receptor (ADGR) subfamily. Homodimer; homodimerizes via its Pentraxin domain in a calcium-independent manner. Heterodimer of 2 chains generated by proteolytic processing; the large extracellular N-terminal fragment and the membrane-bound C-terminal fragment predominantly remain associated and non-covalently linked. In terms of processing, autoproteolytically processed at the GPS region of the GAIN-B domain; this cleavage modulates receptor activity. N-glycosylated. As to expression, detected in fetal retina. Highly expressed in normal enterochromaffin cells and in neuroendocrine carcinoma. Detected in normal liver; highly expressed in primary liver carcinoma.

Its subcellular location is the membrane. With respect to regulation, forms a heterodimer of 2 chains generated by proteolytic processing that remain associated through non-covalent interactions mediated by the GAIN-B domain. In the inactivated receptor, the Stachel sequence (also named stalk) is embedded in the GAIN-B domain, where it adopts a beta-strand conformation. On activation, the Stachel moves into the 7 transmembrane region and adopts a twisted hook-shaped configuration that forms contacts within the receptor, leading to coupling of a G-alpha protein, which activates signaling. The cleaved GAIN-B and N-terminal domains can then dissociate from the rest of the receptor. Functionally, orphan adhesion G-protein coupled receptor (aGPCR). Ligand binding causes a conformation change that triggers signaling via guanine nucleotide-binding proteins (G proteins) and modulates the activity of downstream effectors, such as adenylate cyclase. ADGRG4 is coupled to G(s) G proteins and mediates activation of adenylate cyclase activity. May be act as sensor of mechanical forces. This Homo sapiens (Human) protein is Adhesion G-protein coupled receptor G4.